We begin with the raw amino-acid sequence, 210 residues long: Signal peptidase complex catalytic subunit SEC11 (210 aa).

Residues 1–21 are Cytoplasmic-facing; sequence MLAGLSPHLSNLRRSLTQVLN. The helical; Signal-anchor for type II membrane protein transmembrane segment at 22-38 threads the bilayer; the sequence is FALVLSTAFMMWKGLSI. Topologically, residues 39-210 are lumenal; it reads YTNSSSPIVV…MGAMVILQRE (172 aa). Asn41 carries N-linked (GlcNAc...) asparagine glycosylation. Catalysis depends on charge relay system residues Ser53, His92, and Asp152. A C-terminal short (CTS) helix region spans residues 196 to 207; it reads VLLGIMGAMVIL.

Belongs to the peptidase S26B family. As to quaternary structure, component of the signal peptidase complex (SPC) composed of a catalytic subunit SEC11 and three accessory subunits SPC1, SPC2 and SPC3. The complex induces a local thinning of the ER membrane which is used to measure the length of the signal peptide (SP) h-region of protein substrates. This ensures the selectivity of the complex towards h-regions shorter than 18-20 amino acids. SPC associates with the translocon complex.

Its subcellular location is the endoplasmic reticulum membrane. It catalyses the reaction Cleavage of hydrophobic, N-terminal signal or leader sequences from secreted and periplasmic proteins.. Its function is as follows. Catalytic component of the signal peptidase complex (SPC) which catalyzes the cleavage of N-terminal signal sequences from nascent proteins as they are translocated into the lumen of the endoplasmic reticulum. Specifically cleaves N-terminal signal peptides that contain a hydrophobic alpha-helix (h-region) shorter than 18-20 amino acids. This is Signal peptidase complex catalytic subunit SEC11 (SEC11) from Coccidioides posadasii (strain C735) (Valley fever fungus).